A 396-amino-acid polypeptide reads, in one-letter code: Cytochrome b (396 aa).

Helical transmembrane passes span 32-52 (FGSL…TLAM), 76-98 (WLLR…LHIG), 113-133 (LWSI…IGYV), and 179-199 (FFSL…MHLL). Residues H82 and H96 each coordinate heme b. Positions 183 and 197 each coordinate heme b. Position 202 (H202) interacts with a ubiquinone. Helical transmembrane passes span 225 to 245 (FTSK…IFVF), 289 to 309 (LGGV…ALIH), 321 to 341 (LLNL…WVGA), and 348 to 368 (YILI…ILMI).

Belongs to the cytochrome b family. Fungal cytochrome b-c1 complex contains 10 subunits; 3 respiratory subunits, 2 core proteins and 5 low-molecular weight proteins. Cytochrome b-c1 complex is a homodimer. Requires heme b as cofactor.

It is found in the mitochondrion inner membrane. In terms of biological role, component of the ubiquinol-cytochrome c reductase complex (complex III or cytochrome b-c1 complex) that is part of the mitochondrial respiratory chain. The b-c1 complex mediates electron transfer from ubiquinol to cytochrome c. Contributes to the generation of a proton gradient across the mitochondrial membrane that is then used for ATP synthesis. The chain is Cytochrome b (cob) from Spizellomyces punctatus.